A 191-amino-acid polypeptide reads, in one-letter code: Cell division protein SepF (191 aa).

Over residues E156 to G167 the composition is skewed to polar residues. Residues E156 to L191 form a disordered region.

It belongs to the SepF family. Homodimer. Interacts with FtsZ.

The protein localises to the cytoplasm. In terms of biological role, cell division protein that is part of the divisome complex and is recruited early to the Z-ring. Probably stimulates Z-ring formation, perhaps through the cross-linking of FtsZ protofilaments. Its function overlaps with FtsA. The polypeptide is Cell division protein SepF (Prochlorococcus marinus (strain NATL1A)).